Consider the following 113-residue polypeptide: MSDVSVPLTFSDVAAAKVKTLIAEEENPNLKLRVYITGGGCSGFQYGFTFDEDVNEGDMTIENDGVTLVVDPMSLQYLIGGKVDYTEGLEGSRFFIDNPNATTTCGCGASFSV.

Cys-41, Cys-105, and Cys-107 together coordinate iron-sulfur cluster.

It belongs to the HesB/IscA family. In terms of assembly, homodimer. It depends on iron-sulfur cluster as a cofactor.

In terms of biological role, required for insertion of 4Fe-4S clusters for at least IspG. This Aliivibrio fischeri (strain ATCC 700601 / ES114) (Vibrio fischeri) protein is Iron-sulfur cluster insertion protein ErpA.